The sequence spans 179 residues: Large ribosomal subunit protein uL6c (179 aa).

It belongs to the universal ribosomal protein uL6 family. In terms of assembly, part of the 50S ribosomal subunit.

Its subcellular location is the plastid. The protein resides in the chloroplast. Binds 23S rRNA. The chain is Large ribosomal subunit protein uL6c (rpl6) from Guillardia theta (Cryptophyte).